Reading from the N-terminus, the 1068-residue chain is Cytospin-B (1068 aa).

The segment at 1–221 is disordered; it reads MRSAAKPWNP…VDGTSVSPGD (221 aa). Arg-2 is lipidated: N-myristoyl glycine. Positions 29-40 are enriched in low complexity; that stretch reads SSGMKSSKSSTS. 2 positions are modified to phosphoserine: Ser-38 and Ser-55. At Thr-78 the chain carries Phosphothreonine. A phosphoserine mark is found at Ser-112, Ser-131, Ser-134, Ser-137, and Ser-138. Residues 126–144 are compositionally biased toward low complexity; sequence SNPRKSVSSPTSSNTPTPT. Thr-142 carries the phosphothreonine modification. Residues 154–200 are compositionally biased toward basic and acidic residues; sequence PKQENEGGEKAALESQVRELLAEAKAKDSEINRLRSELKKYKEKRTL. Ser-218 and Ser-241 each carry phosphoserine. Composition is skewed to polar residues over residues 261 to 295, 309 to 323, and 337 to 367; these read PNSE…QMSS, LRTS…TKAS, and ETPS…SVSE. A disordered region spans residues 261–367; sequence PNSEGAASHT…AGSSPNSVSE (107 aa). Residues Ser-361, Ser-366, Ser-369, and Ser-425 each carry the phosphoserine modification. Residues 579-773 adopt a coiled-coil conformation; that stretch reads EVQEMLKVAR…QKELGDVQGH (195 aa). Residues 777–796 are disordered; sequence VTSRAAPPPVDEEPESSEVD. 2 positions are modified to phosphoserine: Ser-847 and Ser-863. Disordered regions lie at residues 859 to 885 and 898 to 922; these read AAAV…TQRL and GRTE…SRPP. The segment covering 866–875 has biased composition (polar residues); sequence QRHSTYSSVR. Residues 898-909 show a composition bias toward basic and acidic residues; sequence GRTETLKPDPHL. Residues Ser-912 and Ser-914 each carry the phosphoserine modification. The segment covering 912 to 922 has biased composition (low complexity); it reads SPSLESLSRPP. Positions 962 to 1067 constitute a Calponin-homology (CH) domain; that stretch reads GSKRNALLKW…YVAQIYKYFE (106 aa).

It belongs to the cytospin-A family. In terms of tissue distribution, highly expressed in testis. Barely detectable in other tissues. Also highly expressed in some cancer cell lines.

It is found in the nucleus. It localises to the membrane. This Homo sapiens (Human) protein is Cytospin-B (SPECC1).